Here is a 388-residue protein sequence, read N- to C-terminus: LL-diaminopimelate aminotransferase (388 aa).

Positions 16 and 41 each coordinate substrate. Pyridoxal 5'-phosphate-binding positions include Tyr-70, 104–105 (SK), Tyr-129, Asn-179, Tyr-210, and 239–241 (SLS). The substrate site is built by Lys-105, Tyr-129, and Asn-179. The residue at position 242 (Lys-242) is an N6-(pyridoxal phosphate)lysine. Residue Arg-250 coordinates pyridoxal 5'-phosphate. Arg-368 provides a ligand contact to substrate.

Belongs to the class-I pyridoxal-phosphate-dependent aminotransferase family. LL-diaminopimelate aminotransferase subfamily. Homodimer. Pyridoxal 5'-phosphate is required as a cofactor.

It carries out the reaction (2S,6S)-2,6-diaminopimelate + 2-oxoglutarate = (S)-2,3,4,5-tetrahydrodipicolinate + L-glutamate + H2O + H(+). The protein operates within amino-acid biosynthesis; L-lysine biosynthesis via DAP pathway; LL-2,6-diaminopimelate from (S)-tetrahydrodipicolinate (aminotransferase route): step 1/1. Involved in the synthesis of meso-diaminopimelate (m-DAP or DL-DAP), required for both lysine and peptidoglycan biosynthesis. Catalyzes the direct conversion of tetrahydrodipicolinate to LL-diaminopimelate. The sequence is that of LL-diaminopimelate aminotransferase from Oleidesulfovibrio alaskensis (strain ATCC BAA-1058 / DSM 17464 / G20) (Desulfovibrio alaskensis).